The primary structure comprises 1061 residues: Calcium-transporting ATPase 4, endoplasmic reticulum-type (1061 aa).

Residues 1 to 21 are disordered; sequence MGKGGEDCGNKQTNSSELVKS. The Cytoplasmic portion of the chain corresponds to 1-70; that stretch reads MGKGGEDCGN…NELEKPEGTS (70 aa). The chain crosses the membrane as a helical span at residues 71-91; it reads IFKLILEQFNDTLVRILLAAA. The Lumenal segment spans residues 92-115; the sequence is VISFVLAFFDGDEGGEMGITAFVE. A helical membrane pass occupies residues 116 to 135; it reads PLVIFLILIVNAIVGIWQET. Residues 136-278 lie on the Cytoplasmic side of the membrane; it reads NAEKALEALK…EEDTPLKKKL (143 aa). The chain crosses the membrane as a helical span at residues 279-298; that stretch reads NEFGEVLTMIIGLICALVWL. Residues 299–327 are Lumenal-facing; that stretch reads INVKYFLSWEYVDGWPRNFKFSFEKCTYY. A helical membrane pass occupies residues 328 to 345; the sequence is FEIAVALAVAAIPEGLPA. Residues V336, A337, I339, and E341 each coordinate Ca(2+). Residues 346 to 786 are Cytoplasmic-facing; sequence VITTCLALGT…GEGRSIYNNM (441 aa). The active-site 4-aspartylphosphate intermediate is D383. Mg(2+) is bound by residues D731 and D735. A helical transmembrane segment spans residues 787-806; the sequence is KAFIRYMISSNIGEVASIFL. N797 and E800 together coordinate Ca(2+). Topologically, residues 807 to 816 are lumenal; the sequence is TAALGIPEGM. The chain crosses the membrane as a helical span at residues 817 to 837; that stretch reads IPVQLLWVNLVTDGPPATALG. Residues N825, T828, and D829 each coordinate Ca(2+). At 838-857 the chain is on the cytoplasmic side; it reads FNPPDKDIMKKPPRRSDDSL. A helical transmembrane segment spans residues 858-880; the sequence is ITAWILFRYMVIGLYVGVATVGV. At 881 to 950 the chain is on the lumenal side; the sequence is FIIWYTHNSF…YFQQGKIKAS (70 aa). A helical transmembrane segment spans residues 951 to 970; that stretch reads TLSLSVLVAIEMFNSLNALS. Position 961 (E961) interacts with Ca(2+). The Cytoplasmic portion of the chain corresponds to 971–983; sequence EDGSLVTMPPWVN. A helical transmembrane segment spans residues 984–1002; it reads PWLLLAMAVSFGLHFVILY. Residues 1003–1017 are Lumenal-facing; sequence VPFLAQVFGIVPLSL. Residues 1018 to 1038 form a helical membrane-spanning segment; the sequence is NEWLLVLAVSLPVILIDEVLK. Residues 1039–1061 are Cytoplasmic-facing; the sequence is FVGRCTSGYRYSPRTPSAKQKEE.

This sequence belongs to the cation transport ATPase (P-type) (TC 3.A.3) family. Type IIA subfamily.

It localises to the membrane. The enzyme catalyses Ca(2+)(in) + ATP + H2O = Ca(2+)(out) + ADP + phosphate + H(+). Its function is as follows. This magnesium-dependent enzyme catalyzes the hydrolysis of ATP coupled with the translocation of calcium from the cytosol to an endomembrane compartment. The sequence is that of Calcium-transporting ATPase 4, endoplasmic reticulum-type (ECA4) from Arabidopsis thaliana (Mouse-ear cress).